A 195-amino-acid polypeptide reads, in one-letter code: MIEFVKGPVAYVCAEYITLDVSGVGYKVHVPNPFFYREQDEHVIVFTHHYVREDQQTLYGFRSRRERELFNKLLSVSGIGPKGALAIVASGDIDALIDAIETENEKYLTKFPGVGKKTAKQMALDLKGKLSELAPDYVPNEGLFAQGASELDEACEALVALGYSEREIAKVRKALSGEILTTDAYIKRALQLLLK.

Residues Met-1–Arg-62 form a domain I region. The domain II stretch occupies residues Ser-63–Glu-141. A flexible linker region spans residues Glu-141–Ala-145. The domain III stretch occupies residues Gln-146 to Lys-195.

The protein belongs to the RuvA family. Homotetramer. Forms an RuvA(8)-RuvB(12)-Holliday junction (HJ) complex. HJ DNA is sandwiched between 2 RuvA tetramers; dsDNA enters through RuvA and exits via RuvB. An RuvB hexamer assembles on each DNA strand where it exits the tetramer. Each RuvB hexamer is contacted by two RuvA subunits (via domain III) on 2 adjacent RuvB subunits; this complex drives branch migration. In the full resolvosome a probable DNA-RuvA(4)-RuvB(12)-RuvC(2) complex forms which resolves the HJ.

It is found in the cytoplasm. In terms of biological role, the RuvA-RuvB-RuvC complex processes Holliday junction (HJ) DNA during genetic recombination and DNA repair, while the RuvA-RuvB complex plays an important role in the rescue of blocked DNA replication forks via replication fork reversal (RFR). RuvA specifically binds to HJ cruciform DNA, conferring on it an open structure. The RuvB hexamer acts as an ATP-dependent pump, pulling dsDNA into and through the RuvAB complex. HJ branch migration allows RuvC to scan DNA until it finds its consensus sequence, where it cleaves and resolves the cruciform DNA. The polypeptide is Holliday junction branch migration complex subunit RuvA (Exiguobacterium sp. (strain ATCC BAA-1283 / AT1b)).